Here is a 137-residue protein sequence, read N- to C-terminus: Large-conductance mechanosensitive channel (137 aa).

The Cytoplasmic segment spans residues 1 to 16 (MSIIKEFREFAMRGNV). Residues 17 to 45 (VDLAVGVIIGALFGKIVSSLVSDIIMPPL) traverse the membrane as a helical segment. Residues 46–74 (GLLIGGVDFKQFALFLRNAQGGIPAVVMN) lie on the Periplasmic side of the membrane. The chain crosses the membrane as a helical span at residues 75 to 94 (YGAFIQNIFDFIIVAFAIFI). The Cytoplasmic segment spans residues 95-137 (AIKLMNKMRCKQEDTPAAPPKPSAEEKLLAEIRDLLKEQQTRQ).

This sequence belongs to the MscL family. Homopentamer.

It is found in the cell inner membrane. Functionally, channel that opens in response to stretch forces in the membrane lipid bilayer. Forms a nonselective ion channel with a conductance of about 4 nanosiemens. May participate in the regulation of osmotic pressure changes within the cell. The protein is Large-conductance mechanosensitive channel of Pectobacterium carotovorum (Erwinia carotovora).